The chain runs to 432 residues: Adenylosuccinate synthetase 2 (432 aa).

Residues 12 to 18 (GDEGKGR) and 40 to 42 (GHT) each bind GTP. Asp13 functions as the Proton acceptor in the catalytic mechanism. Mg(2+)-binding residues include Asp13 and Gly40. Residues 13-16 (DEGK), 38-41 (NAGH), Thr128, Arg142, Gln222, Thr237, and Arg301 contribute to the IMP site. His41 (proton donor) is an active-site residue. 297 to 303 (VNTGRPR) is a substrate binding site. Residues Arg303, 329–331 (KLD), and 411–413 (TTG) contribute to the GTP site.

It belongs to the adenylosuccinate synthetase family. As to quaternary structure, homodimer. It depends on Mg(2+) as a cofactor.

The protein resides in the cytoplasm. The enzyme catalyses IMP + L-aspartate + GTP = N(6)-(1,2-dicarboxyethyl)-AMP + GDP + phosphate + 2 H(+). Its pathway is purine metabolism; AMP biosynthesis via de novo pathway; AMP from IMP: step 1/2. Functionally, plays an important role in the de novo pathway of purine nucleotide biosynthesis. Catalyzes the first committed step in the biosynthesis of AMP from IMP. This Burkholderia lata (strain ATCC 17760 / DSM 23089 / LMG 22485 / NCIMB 9086 / R18194 / 383) protein is Adenylosuccinate synthetase 2.